Consider the following 253-residue polypeptide: Ubiquinone/menaquinone biosynthesis C-methyltransferase UbiE (253 aa).

S-adenosyl-L-methionine is bound by residues threonine 76, aspartate 97, and 125-126 (NA).

Belongs to the class I-like SAM-binding methyltransferase superfamily. MenG/UbiE family.

It carries out the reaction a 2-demethylmenaquinol + S-adenosyl-L-methionine = a menaquinol + S-adenosyl-L-homocysteine + H(+). It catalyses the reaction a 2-methoxy-6-(all-trans-polyprenyl)benzene-1,4-diol + S-adenosyl-L-methionine = a 5-methoxy-2-methyl-3-(all-trans-polyprenyl)benzene-1,4-diol + S-adenosyl-L-homocysteine + H(+). Its pathway is quinol/quinone metabolism; menaquinone biosynthesis; menaquinol from 1,4-dihydroxy-2-naphthoate: step 2/2. It functions in the pathway cofactor biosynthesis; ubiquinone biosynthesis. In terms of biological role, methyltransferase required for the conversion of demethylmenaquinol (DMKH2) to menaquinol (MKH2) and the conversion of 2-polyprenyl-6-methoxy-1,4-benzoquinol (DDMQH2) to 2-polyprenyl-3-methyl-6-methoxy-1,4-benzoquinol (DMQH2). The chain is Ubiquinone/menaquinone biosynthesis C-methyltransferase UbiE from Nitrobacter hamburgensis (strain DSM 10229 / NCIMB 13809 / X14).